The sequence spans 214 residues: SINYXNMSNHHMLSTFNLLPVGSNISTWWNFGSMLMTCLALQTITGFFLAIHYTANINLAFSSIMHITRDIPYGWIMQNLHAIGASMFFVCIYIHIARGIYYGSYLNKEVWLSGVILLTALMATAFFGYVLPWGQMSFWAATVITNLLTAIPYLGTMLTTWLWGGFSINDPTLTRFFALHFVLPFIIISMSSIHIILLHNEGSSNPLGTNSDID.

4 helical membrane passes run 31–51 (FGSMLMTCLALQTITGFFLAI), 75–96 (WIMQNLHAIGASMFFVCIYIHI), 111–131 (WLSGVILLTALMATAFFGYVL), and 176–196 (FFALHFVLPFIIISMSSIHII). Heme b-binding residues include H81 and H95. H180 and H194 together coordinate heme b. H199 provides a ligand contact to a ubiquinone.

This sequence belongs to the cytochrome b family. The cytochrome bc1 complex contains 3 respiratory subunits (MT-CYB, CYC1 and UQCRFS1), 2 core proteins (UQCRC1 and UQCRC2) and probably 6 low-molecular weight proteins. The cofactor is heme b.

The protein resides in the mitochondrion inner membrane. Component of the ubiquinol-cytochrome c reductase complex (complex III or cytochrome b-c1 complex) that is part of the mitochondrial respiratory chain. The b-c1 complex mediates electron transfer from ubiquinol to cytochrome c. Contributes to the generation of a proton gradient across the mitochondrial membrane that is then used for ATP synthesis. In Atractaspis micropholis (Mole viper), this protein is Cytochrome b (MT-CYB).